The primary structure comprises 613 residues: MPKYRSSTTTQGRNMAGARSLWKATGMTDLDFKKPIIAVVNSFTEFVPGHIHLRNLGKLISSEIKLTGGVAKEFNTIAIDDGIAMGHSGMLYSLPSRELIADSIEYMINAHCADAMICISNCDKITPGMLMAALRLNIPCIFISGGPMESGKIFINEKEIKIDLIDAIKYSADPNSADDLVNQIEDSSCPTCGSCSGLFTANSMNCLTEALGLSLPGNGTLLATHVDRKKLFIQAGRLIVKITKDYYKNNNENLLPRNIASRQSFLNAMSLDIAMGGSTNTILHLLAIAKEGNIDFTMSDIDSLSKKVPHLCKISPNSTTYHMEDFHRAGGVMGLLAELNRINLLNKNINNVLGLNLETTLNIYDILTTKDKNIINMFRAGPFGKKTIIPFTQSYRWPKLDKDRQKGCIRSYEFAFSNDGGLAILYGNIAKNGCVVKTAGVKKDNLIFTGNAIVFESQEDAVRAILEGKIQKGHVIVIRYEGPKGGPGMQEMLYPTTYLKSMGLDQHCALITDGRFSGGTSGLSIGHISPEAASKGNIALIKNSDCININIPDRIIHLDITNDELLLRIENENKKGSLSYTPLYRQRYVSPALKMYAFFAMSADKGAVRKIRF.

A Mg(2+)-binding site is contributed by D81. C122 is a [2Fe-2S] cluster binding site. Residues D123 and K124 each contribute to the Mg(2+) site. K124 bears the N6-carboxylysine mark. C195 provides a ligand contact to [2Fe-2S] cluster. A Mg(2+)-binding site is contributed by E491. The active-site Proton acceptor is the S517.

The protein belongs to the IlvD/Edd family. As to quaternary structure, homodimer. It depends on [2Fe-2S] cluster as a cofactor. The cofactor is Mg(2+).

It carries out the reaction (2R)-2,3-dihydroxy-3-methylbutanoate = 3-methyl-2-oxobutanoate + H2O. It catalyses the reaction (2R,3R)-2,3-dihydroxy-3-methylpentanoate = (S)-3-methyl-2-oxopentanoate + H2O. It participates in amino-acid biosynthesis; L-isoleucine biosynthesis; L-isoleucine from 2-oxobutanoate: step 3/4. It functions in the pathway amino-acid biosynthesis; L-valine biosynthesis; L-valine from pyruvate: step 3/4. Functions in the biosynthesis of branched-chain amino acids. Catalyzes the dehydration of (2R,3R)-2,3-dihydroxy-3-methylpentanoate (2,3-dihydroxy-3-methylvalerate) into 2-oxo-3-methylpentanoate (2-oxo-3-methylvalerate) and of (2R)-2,3-dihydroxy-3-methylbutanoate (2,3-dihydroxyisovalerate) into 2-oxo-3-methylbutanoate (2-oxoisovalerate), the penultimate precursor to L-isoleucine and L-valine, respectively. This Buchnera aphidicola subsp. Melaphis rhois protein is Dihydroxy-acid dehydratase.